A 515-amino-acid polypeptide reads, in one-letter code: MVPMLWLTAYMAVAVLTAILLNVVYQLFFRLWNRTEPPMVFHWVPYLGSTISYGIDPYKFFFACREKYGDIFTFILLGQKTTVYLGVQGNEFILNGKLKDVNAEEVYSPLTTPVFGSDVVYDCPNSKLMEQKKFIKYGLTQSALESHVPLIEKEVLDYLRDSPNFQGSSGRVDISAAMAEITIFTAARALQGQEVRSKLTAEFADLYHDLDKGFTPINFMLPWAPLPHNKKRDAAHARMRSIYVDIITQRRLDGEKDSQKSDMIWNLMNCTYKNGQQVPDKEIAHMMITLLMAGQHSSSSISAWIMLRLASQPKVLEELYQEQLANLGPAGPDGSLPPLQYKDLDKLPFHQHVIRETLRIHSSIHSIMRKVKSPLPVPGTPYMIPPGRVLLASPGVTALSDEHFPNAGCWDPHRWENQATKEQENDKVVDYGYGAVSKGTSSPYLPFGAGRHRCIGEKFAYVNLGVILATIVRHLRLFNVDGKKGVPETDYSSLFSGPMKPSIIGWEKRSKNTSK.

Residues 7 to 29 (LTAYMAVAVLTAILLNVVYQLFF) traverse the membrane as a helical segment. Asn-33 and Asn-269 each carry an N-linked (GlcNAc...) asparagine glycan. Cys-454 contacts heme. N-linked (GlcNAc...) asparagine glycosylation occurs at Asn-512.

It belongs to the cytochrome P450 family. The cofactor is heme.

It is found in the endoplasmic reticulum membrane. It carries out the reaction a 14alpha-methyl steroid + 3 reduced [NADPH--hemoprotein reductase] + 3 O2 = a Delta(14) steroid + formate + 3 oxidized [NADPH--hemoprotein reductase] + 4 H2O + 4 H(+). It catalyses the reaction a 14alpha-methyl steroid + reduced [NADPH--hemoprotein reductase] + O2 = a 14alpha-hydroxymethyl steroid + oxidized [NADPH--hemoprotein reductase] + H2O + H(+). The catalysed reaction is a 14alpha-hydroxymethyl steroid + reduced [NADPH--hemoprotein reductase] + O2 = a 14alpha-formyl steroid + oxidized [NADPH--hemoprotein reductase] + 2 H2O + H(+). The enzyme catalyses a 14alpha-formyl steroid + reduced [NADPH--hemoprotein reductase] + O2 = a Delta(14) steroid + formate + oxidized [NADPH--hemoprotein reductase] + H2O + 2 H(+). It carries out the reaction lanosterol + 3 reduced [NADPH--hemoprotein reductase] + 3 O2 = 4,4-dimethyl-5alpha-cholesta-8,14,24-trien-3beta-ol + formate + 3 oxidized [NADPH--hemoprotein reductase] + 4 H2O + 4 H(+). It catalyses the reaction lanosterol + reduced [NADPH--hemoprotein reductase] + O2 = 32-hydroxylanosterol + oxidized [NADPH--hemoprotein reductase] + H2O + H(+). The catalysed reaction is 32-hydroxylanosterol + reduced [NADPH--hemoprotein reductase] + O2 = 32-oxolanosterol + oxidized [NADPH--hemoprotein reductase] + 2 H2O + H(+). The enzyme catalyses 32-oxolanosterol + reduced [NADPH--hemoprotein reductase] + O2 = 4,4-dimethyl-5alpha-cholesta-8,14,24-trien-3beta-ol + formate + oxidized [NADPH--hemoprotein reductase] + H2O + 2 H(+). It carries out the reaction eburicol + 3 reduced [NADPH--hemoprotein reductase] + 3 O2 = 14-demethyleburicol + formate + 3 oxidized [NADPH--hemoprotein reductase] + 4 H2O + 4 H(+). It catalyses the reaction eburicol + reduced [NADPH--hemoprotein reductase] + O2 = 32-hydroxyeburicol + oxidized [NADPH--hemoprotein reductase] + H2O + H(+). The catalysed reaction is 32-hydroxyeburicol + reduced [NADPH--hemoprotein reductase] + O2 = 32-oxoeburicol + oxidized [NADPH--hemoprotein reductase] + 2 H2O + H(+). The enzyme catalyses 32-oxoeburicol + reduced [NADPH--hemoprotein reductase] + O2 = 14-demethyleburicol + formate + oxidized [NADPH--hemoprotein reductase] + H2O + 2 H(+). The protein operates within steroid metabolism; ergosterol biosynthesis. Its activity is regulated as follows. The sterol 14-alpha demethylase activity is inhibited by azole compounds. Activity is inhibited by the novel and long-acting fungicidal azole, PC1244. Its function is as follows. Sterol 14alpha-demethylase, encoded by cyp51A and cyp51B, that plays a critical role in the third module of ergosterol biosynthesis pathway, being ergosterol the major sterol component in fungal membranes that participates in a variety of functions. The third module or late pathway involves the ergosterol synthesis itself through consecutive reactions that mainly occur in the endoplasmic reticulum (ER) membrane. In filamentous fungi, during the initial step of this module, lanosterol (lanosta-8,24-dien-3beta-ol) can be metabolized to eburicol. Sterol 14alpha-demethylase catalyzes the three-step oxidative removal of the 14alpha-methyl group (C-32) of both these sterols in the form of formate, and converts eburicol and lanosterol to 14-demethyleburicol (4,4,24-trimethylergosta-8,14,24(28)-trienol) and 4,4-dimethyl-5alpha-cholesta-8,14,24-trien-3beta-ol, respectively, which are further metabolized by other enzymes in the pathway to ergosterol. Can also use substrates not intrinsic to fungi, such as 24,25-dihydrolanosterol (DHL), producing 4,4'-dimethyl-8,14-cholestadien-3-beta-ol, but at lower rates than the endogenous substrates. In terms of biological role, as a target of azole drugs, plays a crucial role in azole susceptibility. This chain is Sterol 14-alpha demethylase cyp51A, found in Aspergillus fumigatus (strain ATCC MYA-4609 / CBS 101355 / FGSC A1100 / Af293) (Neosartorya fumigata).